Reading from the N-terminus, the 133-residue chain is U6 snRNA-associated Sm-like protein LSm1 (133 aa).

In terms of domain architecture, Sm spans 5–80 (PGTASLIEDI…VVLLGEIDLE (76 aa)). Ser-123 is subject to Phosphoserine. At Thr-129 the chain carries Phosphothreonine.

It belongs to the snRNP Sm proteins family. Interacts with SLBP; interaction with SLBP occurs when histone mRNA is being rapidly degraded during the S phase. LSm subunits form a heteromer with a donut shape.

The protein resides in the cytoplasm. Its subcellular location is the P-body. Functionally, plays a role in the degradation of histone mRNAs, the only eukaryotic mRNAs that are not polyadenylated. Probably also part of an LSm subunits-containing complex involved in the general process of mRNA degradation. In Homo sapiens (Human), this protein is U6 snRNA-associated Sm-like protein LSm1 (LSM1).